The chain runs to 577 residues: Efflux pump notK' (577 aa).

2 N-linked (GlcNAc...) asparagine glycosylation sites follow: Asn62 and Asn84. A run of 5 helical transmembrane segments spans residues 104–124 (AAIASVASFFLGLLANLPVAL), 151–171 (LAVTAVFVEGWIFLGLTMLGI), 189–209 (AGIGLYLTLIGLSYSAGLGLV), 241–261 (NPTMWIGIFCGGFFTVFLMMY), and 265–285 (GAVIAGILLVSIISWPRTTPV). Residue Asn320 is glycosylated (N-linked (GlcNAc...) asparagine). Transmembrane regions (helical) follow at residues 328–348 (FGLALITFLYVDILDATGTLY), 373–393 (VDAICISIGSLFGSPPVTAFV), 413–433 (GICFFIAVFFAPIFASIPPWA), 434–454 (TGSTLVIVGSMMMHATLEINW), and 476–496 (IADGLIAGIISYILINGGVWV). Positions 555–566 (MPPNGSMSSGSP) are enriched in low complexity. A disordered region spans residues 555 to 577 (MPPNGSMSSGSPEQVAEKAVGKY). A glycan (N-linked (GlcNAc...) asparagine) is linked at Asn558.

This sequence belongs to the nucleobase:cation symporter-2 (NCS2) (TC 2.A.40) family. Azg-like subfamily.

The protein resides in the cell membrane. In terms of biological role, efflux pump; part of the gene cluster that mediates the biosynthesis of notoamide, a fungal indole alkaloid that belongs to a family of natural products containing a characteristic bicyclo[2.2.2]diazaoctane core. The chain is Efflux pump notK' from Aspergillus versicolor.